The chain runs to 592 residues: Membrane protein insertase YidC (592 aa).

5 helical membrane-spanning segments follow: residues 8 to 28 (LFIA…FVMG), 363 to 385 (ALGQ…MFPL), 430 to 450 (INPL…FALY), 493 to 513 (IWLI…GLTM), and 531 to 551 (IFAF…AGLV).

This sequence belongs to the OXA1/ALB3/YidC family. Type 1 subfamily. In terms of assembly, interacts with the Sec translocase complex via SecD. Specifically interacts with transmembrane segments of nascent integral membrane proteins during membrane integration.

The protein localises to the cell inner membrane. Required for the insertion and/or proper folding and/or complex formation of integral membrane proteins into the membrane. Involved in integration of membrane proteins that insert both dependently and independently of the Sec translocase complex, as well as at least some lipoproteins. Aids folding of multispanning membrane proteins. This is Membrane protein insertase YidC from Maricaulis maris (strain MCS10) (Caulobacter maris).